A 78-amino-acid chain; its full sequence is Omega-conotoxin-like SO-4 (78 aa).

The first 22 residues, 1–22, serve as a signal peptide directing secretion; it reads MKLTCMVIVAVLLLTACQLITA. Residues 23 to 42 constitute a propeptide that is removed on maturation; sequence DDSRGTQKHRSLRSTTKVSK. Cystine bridges form between cysteine 46–cysteine 62, cysteine 53–cysteine 65, and cysteine 61–cysteine 72.

It belongs to the conotoxin O1 superfamily. As to expression, expressed by the venom duct.

The protein localises to the secreted. Omega-conotoxins act at presynaptic membranes, they bind and block voltage-gated calcium channels (Cav). The polypeptide is Omega-conotoxin-like SO-4 (SO4) (Conus striatus (Striated cone)).